The primary structure comprises 780 residues: Lethal(3)malignant brain tumor-like protein 3 (780 aa).

Positions 1 to 64 (MTESASSTSG…VKKATATTTW (64 aa)) are interaction with RBPJ. Required for transcription repressor activity on Notch target genes. A disordered region spans residues 149 to 220 (DKDQKEERDV…RKRRGDSAVL (72 aa)). Acidic residues-rich tracts occupy residues 157–166 (DVEEDNEEED) and 185–194 (EDGEERDDEM). MBT repeat units lie at residues 232–332 (WCWA…LHPP), 340–439 (FNWQ…LITP), and 448–543 (FSWD…LQPP). A CCHHC-type; degenerate zinc finger spans residues 549–593 (LMEASEHGGCSTPGCKGIGHFKRARHLGPHSAANCPYSEINLNKD). Residues 597 to 665 (PDRLSGEMPP…GAREEPTVQQ (69 aa)) are disordered. The tract at residues 600-710 (LSGEMPPASP…PASKVSKWST (111 aa)) is interaction with DCAF5. Phosphoserine is present on serine 608. Lysine 637 is covalently cross-linked (Glycyl lysine isopeptide (Lys-Gly) (interchain with G-Cter in SUMO2)). The span at 643-661 (RTESEMRTSHEARGAREEP) shows a compositional bias: basic and acidic residues. Residue lysine 704 forms a Glycyl lysine isopeptide (Lys-Gly) (interchain with G-Cter in SUMO2) linkage. The 65-residue stretch at 708 to 772 (WSTDEVSEFI…FNSILMFKAA (65 aa)) folds into the SAM domain.

As to quaternary structure, interacts with RNF2. Interacts (via SAM domain) with SAMD1 (via SAM domain); the interaction mediates L3MBTL3 binding to chromatin. Interacts with RBPJ; the interaction is required for L3MBTL3 localization to chromatin and is impaired by Notch-derived peptides containing the intracellular domain (NICD). Interacts (via SAM domain) with KDM1A. Interacts with DCAF5. Interacts with DNMT1. Interacts with E2F1. Interacts with SOX2. Interacts with SFMBT1.

It is found in the nucleus. In terms of biological role, is a negative regulator of Notch target genes expression, required for RBPJ-mediated transcriptional repression. It recruits KDM1A to Notch-responsive elements and promotes KDM1A-mediated H3K4me demethylation. Involved in the regulation of ubiquitin-dependent degradation of a set of methylated non-histone proteins, including SOX2, DNMT1 and E2F1. It acts as an adapter recruiting the CRL4-DCAF5 E3 ubiquitin ligase complex to methylated target proteins. Required for normal maturation of myeloid progenitor cells. In Homo sapiens (Human), this protein is Lethal(3)malignant brain tumor-like protein 3.